Reading from the N-terminus, the 307-residue chain is Probable protein S-acyltransferase 14 (307 aa).

Helical transmembrane passes span 22 to 42 (LGSIMILLVLGVVGVTYYAVV) and 63 to 83 (ILILFHFLLAMLLWSYFSVVF). Residues 127-177 (RFCRKCNQLKPSRCHHCSVCGRCVLKMDHHCVWVVNCVGALNYKYFLLFLF) enclose the DHHC domain. Cys-157 acts as the S-palmitoyl cysteine intermediate in catalysis. Transmembrane regions (helical) follow at residues 171–191 (YFLLFLFYTFLETTLVTLVLM) and 213–233 (TFLAFVLNLAFALSVMGFLIM).

It belongs to the DHHC palmitoyltransferase family.

It localises to the golgi apparatus. Its subcellular location is the trans-Golgi network membrane. The catalysed reaction is L-cysteinyl-[protein] + hexadecanoyl-CoA = S-hexadecanoyl-L-cysteinyl-[protein] + CoA. In terms of biological role, palmitoyl acyltransferase. The sequence is that of Probable protein S-acyltransferase 14 (PAT14) from Arabidopsis thaliana (Mouse-ear cress).